The chain runs to 295 residues: Peptide transport system permease protein SapC (295 aa).

6 helical membrane passes run 27–47 (IALFSFYLLIALIFTALFASY), 102–122 (LLVVFSVAIIGGALGIIAGLL), 129–149 (FVGHIFDAFLSLPILLIAVVI), 157–177 (LWNAMFATLLAILPYFIHTIY), 219–239 (VARAFVIAVLDISALSFISLG), and 262–282 (PWTVLLPGFAIIFTILLSIIF). The ABC transmembrane type-1 domain maps to 98–278 (LGSALLVVFS…GFAIIFTILL (181 aa)).

The protein belongs to the binding-protein-dependent transport system permease family. OppBC subfamily.

The protein localises to the cell inner membrane. Functionally, involved in a peptide intake transport system that plays a role in the resistance to antimicrobial peptides. This Haemophilus influenzae (strain ATCC 51907 / DSM 11121 / KW20 / Rd) protein is Peptide transport system permease protein SapC (sapC).